Reading from the N-terminus, the 312-residue chain is 2-aminophenol 1,6-dioxygenase subunit beta (312 aa).

His13, His62, and Glu251 together coordinate Fe cation.

The protein belongs to the LigB/MhpB extradiol dioxygenase family. In terms of assembly, the APD complex is a heterotetramer of 2 alpha (CnbCa) and 2 beta (CnbCb) subunits. The cofactor is Fe(2+).

The enzyme catalyses 2-aminophenol + O2 = 2-aminomuconate 6-semialdehyde. It carries out the reaction 2-amino-5-chlorophenol + O2 = 2-amino-5-chloromuconate 6-semialdehyde. It functions in the pathway xenobiotic degradation; nitrobenzene degradation. It participates in xenobiotic degradation; 4-chloronitrobenzene degradation. Its activity is regulated as follows. Complete loss of activity in the presence of Ni(2+), Co(2+), Cd(2+), Zn(2+) and hydrogen peroxide, however activity with hydrogen peroxide partially restored upon addition of excess ascorbate. Partially inhibited by Fe(2+), Mg(2+), Ca(2+), Mn(2+), Cu(2+) and also by EDTA, at 2 mM concentration. Total activity inhibited in the presence of catechol or 4-nitrocatechol but completely restored after removal of catechol and addition of 2 mM Fe(2+) and 5 mM ascorbate. Functionally, component of the 2-aminophenol 1,6-dioxygenase (APD) complex that catalyzes the ring fission of 2-aminophenol to produce 2-aminomuconic semialdehyde. CnbCb seems to be the catalytic subunit of the complex. Also active on other substrates such as 2-amino-5-chlorophenol (68% activity), protocatechuate (33% activity) and catechol (5% activity). Both 2-aminophenol and 2-amino-5-cholorophenol are likely native substrates for this dioxygenase which is involved in the reductive degradation pathway of both nitrobenzene (NB) and 4-chloronitrobenzene (4-CNB), allowing C.testosteroni strain CNB-1 to grow on these compounds as sole source of carbon, nitrogen, and energy. In Comamonas testosteroni (Pseudomonas testosteroni), this protein is 2-aminophenol 1,6-dioxygenase subunit beta.